The sequence spans 325 residues: tRNA dimethylallyltransferase (325 aa).

21 to 28 is a binding site for ATP; sequence GPTASGKS. 23 to 28 contributes to the substrate binding site; sequence TASGKS. An interaction with substrate tRNA region spans residues 166–170; that stretch reads QRLAR.

Belongs to the IPP transferase family. Monomer. The cofactor is Mg(2+).

It catalyses the reaction adenosine(37) in tRNA + dimethylallyl diphosphate = N(6)-dimethylallyladenosine(37) in tRNA + diphosphate. Functionally, catalyzes the transfer of a dimethylallyl group onto the adenine at position 37 in tRNAs that read codons beginning with uridine, leading to the formation of N6-(dimethylallyl)adenosine (i(6)A). The polypeptide is tRNA dimethylallyltransferase (Acidiphilium cryptum (strain JF-5)).